Reading from the N-terminus, the 413-residue chain is Na(+)-translocating NADH-quinone reductase subunit B (413 aa).

Transmembrane regions (helical) follow at residues 55–75 (IMIM…YNAG), 128–148 (FLPI…LFCM), and 163–183 (ILFA…LGIT). At Thr235 the chain carries FMN phosphoryl threonine. 5 helical membrane passes run 267-287 (IPGS…AMIV), 296-316 (IIAG…VIGS), 324-344 (MPWH…FMAT), 357-377 (WWYG…NPAY), and 380-400 (GMML…HVVI).

It belongs to the NqrB/RnfD family. In terms of assembly, composed of six subunits; NqrA, NqrB, NqrC, NqrD, NqrE and NqrF. Requires FMN as cofactor.

It is found in the cell inner membrane. The catalysed reaction is a ubiquinone + n Na(+)(in) + NADH + H(+) = a ubiquinol + n Na(+)(out) + NAD(+). Functionally, NQR complex catalyzes the reduction of ubiquinone-1 to ubiquinol by two successive reactions, coupled with the transport of Na(+) ions from the cytoplasm to the periplasm. NqrA to NqrE are probably involved in the second step, the conversion of ubisemiquinone to ubiquinol. This is Na(+)-translocating NADH-quinone reductase subunit B from Vibrio campbellii (strain ATCC BAA-1116).